Here is an 85-residue protein sequence, read N- to C-terminus: Large ribosomal subunit protein bL27 (85 aa).

The tract at residues 1 to 21 (MAHKKAGGSTRNGRDSNAQRL) is disordered. The segment covering 9-19 (STRNGRDSNAQ) has biased composition (polar residues).

Belongs to the bacterial ribosomal protein bL27 family.

In Pectobacterium atrosepticum (strain SCRI 1043 / ATCC BAA-672) (Erwinia carotovora subsp. atroseptica), this protein is Large ribosomal subunit protein bL27.